Reading from the N-terminus, the 177-residue chain is Translation initiation factor IF-3 (177 aa).

It belongs to the IF-3 family. As to quaternary structure, monomer.

Its subcellular location is the cytoplasm. Its function is as follows. IF-3 binds to the 30S ribosomal subunit and shifts the equilibrium between 70S ribosomes and their 50S and 30S subunits in favor of the free subunits, thus enhancing the availability of 30S subunits on which protein synthesis initiation begins. This Clostridium perfringens (strain 13 / Type A) protein is Translation initiation factor IF-3.